The sequence spans 221 residues: Thymidylate kinase (221 aa).

Gly11–Thr18 serves as a coordination point for ATP.

The protein belongs to the thymidylate kinase family.

It catalyses the reaction dTMP + ATP = dTDP + ADP. Functionally, phosphorylation of dTMP to form dTDP in both de novo and salvage pathways of dTTP synthesis. This Lactiplantibacillus plantarum (strain ATCC BAA-793 / NCIMB 8826 / WCFS1) (Lactobacillus plantarum) protein is Thymidylate kinase.